The following is a 97-amino-acid chain: Large ribosomal subunit protein bL27 (97 aa).

A compositionally biased stretch (polar residues) spans 1-10; sequence MVKLNLSNLQ. The propeptide occupies 1-12; the sequence is MVKLNLSNLQHF. The tract at residues 1-38 is disordered; the sequence is MVKLNLSNLQHFAHKKGGGSTSNGRDSQAKRLGAKAAD.

This sequence belongs to the bacterial ribosomal protein bL27 family. In terms of processing, the N-terminus is cleaved by ribosomal processing cysteine protease Prp.

The polypeptide is Large ribosomal subunit protein bL27 (Streptococcus equi subsp. zooepidemicus (strain H70)).